The primary structure comprises 410 residues: Arginine deiminase (410 aa).

C398 acts as the Amidino-cysteine intermediate in catalysis.

It belongs to the arginine deiminase family. In terms of assembly, homodimer.

Its subcellular location is the cytoplasm. The catalysed reaction is L-arginine + H2O = L-citrulline + NH4(+). The protein operates within amino-acid degradation; L-arginine degradation via ADI pathway; carbamoyl phosphate from L-arginine: step 1/2. The sequence is that of Arginine deiminase (arcA) from Mycoplasmopsis arginini (Mycoplasma arginini).